The sequence spans 608 residues: Albumin (608 aa).

Positions Met1 to Ser18 are cleaved as a signal peptide. Positions Arg19–Arg24 are excised as a propeptide. Albumin domains are found at residues Arg19 to Arg210, Glu211 to Pro403, and Leu404 to Ala601. His27 is a binding site for Cu cation. Ser29 carries the phosphoserine modification. Ca(2+)-binding residues include Glu30 and Asp37. A disulfide bond links Cys77 and Cys86. 2 positions are modified to phosphoserine: Ser82 and Ser89. His91 lines the Zn(2+) pocket. 6 disulfide bridges follow: Cys99-Cys115, Cys114-Cys125, Cys148-Cys193, Cys192-Cys201, Cys224-Cys270, and Cys269-Cys277. Lys229 is subject to N6-succinyllysine. Ca(2+) is bound at residue Glu268. Residues His271 and Asp273 each coordinate Zn(2+). The Ca(2+) site is built by Asp273, Glu276, Asp279, and Asp283. Intrachain disulfides connect Cys289–Cys303, Cys302–Cys313, Cys340–Cys385, Cys384–Cys393, Cys416–Cys462, Cys461–Cys472, Cys485–Cys501, and Cys500–Cys511. A Phosphoserine modification is found at Ser443. 2 positions are modified to phosphothreonine: Thr444 and Thr446. Lys460 is subject to N6-succinyllysine. Position 513 is a phosphoserine (Ser513). 2 disulfide bridges follow: Cys538-Cys583 and Cys582-Cys591. Lys558 carries the N6-methyllysine modification. Thr570 is modified (phosphothreonine). Lys588 bears the N6-succinyllysine mark.

It belongs to the ALB/AFP/VDB family. As to quaternary structure, interacts with FCGRT; this interaction regulates ALB homeostasis. Interacts with TASOR. In plasma, occurs in a covalently-linked complex with chromophore-bound alpha-1-microglobulin; this interaction does not prevent fatty acid binding to ALB. Phosphorylated by FAM20C in the extracellular medium. In terms of tissue distribution, plasma.

It localises to the secreted. Binds water, Ca(2+), Na(+), K(+), fatty acids, hormones, bilirubin and drugs. Its main function is the regulation of the colloidal osmotic pressure of blood. Major zinc transporter in plasma, typically binds about 80% of all plasma zinc. Major calcium and magnesium transporter in plasma, binds approximately 45% of circulating calcium and magnesium in plasma. Potentially has more than two calcium-binding sites and might additionally bind calcium in a non-specific manner. The shared binding site between zinc and calcium at residue Asp-273 suggests a crosstalk between zinc and calcium transport in the blood. The rank order of affinity is zinc &gt; calcium &gt; magnesium. Binds to the bacterial siderophore enterobactin and inhibits enterobactin-mediated iron uptake of E.coli from ferric transferrin, and may thereby limit the utilization of iron and growth of enteric bacteria such as E.coli. Does not prevent iron uptake by the bacterial siderophore aerobactin. This is Albumin (ALB) from Felis catus (Cat).